Reading from the N-terminus, the 126-residue chain is Tachykinin-3 (126 aa).

A signal peptide spans 1-20 (MRSTLLFAVILALSSARSLG). Positions 21–83 (AVCEESQEQV…VGPKESPLPQ (63 aa)) are excised as a propeptide. Met-95 carries the post-translational modification Methionine amide. A propeptide spanning residues 99 to 126 (NLQPDTPVDINQENIPSFGTFKYPPSVE) is cleaved from the precursor. The interval 102–126 (PDTPVDINQENIPSFGTFKYPPSVE) is disordered.

This sequence belongs to the tachykinin family.

The protein localises to the secreted. Tachykinins are active peptides which excite neurons, evoke behavioral responses, are potent vasodilators and secretagogues, and contract (directly or indirectly) many smooth muscles. Is a critical central regulator of gonadal function. This is Tachykinin-3 (TAC3) from Bos taurus (Bovine).